A 160-amino-acid chain; its full sequence is Eukaryotic translation initiation factor 5A-4 (160 aa).

The span at 1–12 shows a compositional bias: basic and acidic residues; that stretch reads MSDEEHHFESKA. Residues 1-21 are disordered; it reads MSDEEHHFESKADAGASKTYP. At Lys52 the chain carries Hypusine.

The protein belongs to the eIF-5A family. In terms of processing, lys-52 undergoes hypusination, a unique post-translational modification that consists in the addition of a butylamino group from spermidine to lysine side chain, leading to the formation of the unusual amino acid hypusine. eIF-5As are the only known proteins to undergo this modification, which is essential for their function.

In terms of biological role, translation factor that promotes translation elongation and termination, particularly upon ribosome stalling at specific amino acid sequence contexts. Binds between the exit (E) and peptidyl (P) site of the ribosome and promotes rescue of stalled ribosome: specifically required for efficient translation of polyproline-containing peptides as well as other motifs that stall the ribosome. Acts as a ribosome quality control (RQC) cofactor by joining the RQC complex to facilitate peptidyl transfer during CAT tailing step. The polypeptide is Eukaryotic translation initiation factor 5A-4 (Solanum lycopersicum (Tomato)).